The primary structure comprises 118 residues: Small ribosomal subunit protein uS13 (118 aa).

A disordered region spans residues 93–118 (RGLPVRGQRTKTNARTRKGPRKPIRK).

The protein belongs to the universal ribosomal protein uS13 family. Part of the 30S ribosomal subunit. Forms a loose heterodimer with protein S19. Forms two bridges to the 50S subunit in the 70S ribosome.

Located at the top of the head of the 30S subunit, it contacts several helices of the 16S rRNA. In the 70S ribosome it contacts the 23S rRNA (bridge B1a) and protein L5 of the 50S subunit (bridge B1b), connecting the 2 subunits; these bridges are implicated in subunit movement. Contacts the tRNAs in the A and P-sites. This is Small ribosomal subunit protein uS13 from Pseudomonas fluorescens (strain ATCC BAA-477 / NRRL B-23932 / Pf-5).